The following is a 661-amino-acid chain: Heme transporter BhuA (661 aa).

The signal sequence occupies residues 1–23; sequence MKFTRTLVLASTSLLATVATSQA. The TBDR plug domain maps to 48 to 159; the sequence is KDNIEATGGT…AAGAIRYETV (112 aa). In terms of domain architecture, TBDR beta-barrel spans 170–661; it reads TFGARIIGSY…TFTFQTAFKF (492 aa).

The protein belongs to the TonB-dependent receptor family.

Its subcellular location is the cell outer membrane. Functionally, heme transporter. The polypeptide is Heme transporter BhuA (bhuA) (Brucella abortus biovar 1 (strain 9-941)).